A 426-amino-acid chain; its full sequence is Putative phosphate permease CT_962 (426 aa).

The next 11 membrane-spanning stretches (helical) occupy residues 1–21 (MWLLLVCVVVGGFYTAWNIGA), 37–57 (LTLKQAVLIAAVFEFLGAVLL), 83–103 (VFGMTAALLATGVWLQIASFC), 104–124 (GWPVSTTHAIVGAVLGFGIIL), 140–160 (VSWLASPIIGGYFAFLIFSFI), 183–203 (AIIIFALGLVLILSGAVAPVI), 207–227 (PALRIVCGLSLFAFFFTIWGI), 260–280 (LIVERIFAYLQMIIACFMSFA), 309–329 (VLLVFMSLGGLGLVCGLATWG), 365–385 (LGFPISTTHVVVGSVLGIGFA), and 399–419 (IVLSWFITVPAGAALSIVFFL).

The protein belongs to the inorganic phosphate transporter (PiT) (TC 2.A.20) family.

Its subcellular location is the cell membrane. Its function is as follows. Potential transporter for phosphate. This chain is Putative phosphate permease CT_962, found in Chlamydia trachomatis serovar D (strain ATCC VR-885 / DSM 19411 / UW-3/Cx).